Consider the following 915-residue polypeptide: Phototropin-2 (915 aa).

Over residues 1–10 the composition is skewed to pro residues; it reads MERPRAPPSP. Disordered regions lie at residues 1 to 62 and 84 to 118; these read MERP…EFQD and DDGI…GAFP. A phosphoserine mark is found at serine 9 and serine 22. Over residues 27 to 43 the composition is skewed to polar residues; sequence NPSSGKETHGSTSSSSK. Over residues 93-107 the composition is skewed to basic and acidic residues; the sequence is SEVERSKNMSRRSSE. Positions 120 to 193 constitute a PAS 1 domain; it reads VSQELKTALS…AKIRDCVKNG (74 aa). The residue at position 121 (serine 121) is a Phosphoserine. Residue asparagine 169 participates in FMN binding. At cysteine 170 the chain carries S-4a-FMN cysteine. FMN contacts are provided by arginine 171, glutamine 174, arginine 187, asparagine 202, asparagine 212, glutamine 233, and lysine 238. In terms of domain architecture, PAC 1 spans 194–248; that stretch reads KSYCGRLLNYKKDGTPFWNLLTVTPIKDDQGNTIKFIGMQVEVSKYTEGVNDKAL. The tract at residues 281 to 344 is disordered; it reads HRKSQVQESV…KSSNNRHEDL (64 aa). Polar residues-rich tracts occupy residues 286-310 and 325-337; these read VQES…GRQT and RVST…LKSS. Residue serine 364 is modified to Phosphoserine. The region spanning 376–449 is the PAS 2 domain; it reads QGIDLATTLE…QKIRDAIRDQ (74 aa). Asparagine 425 contributes to the FMN binding site. At cysteine 426 the chain carries S-4a-FMN cysteine. FMN-binding residues include arginine 427, glutamine 430, arginine 443, asparagine 458, asparagine 468, phenylalanine 470, and glutamine 489. The 55-residue stretch at 450-504 folds into the PAC 2 domain; sequence REITVQLINYTKSGKKFWNLFHLQPMRDQKGELQYFIGVQLDGSDHVEPLQNRLS. The Protein kinase domain maps to 577 to 864; sequence FKPIKPLGSG…ANEIKQHAFF (288 aa). ATP contacts are provided by residues 583–591 and lysine 606; that span reads LGSGDTGSV. Aspartate 702 serves as the catalytic Proton acceptor. The tract at residues 720–774 is activation loop; the sequence is DFDLSFMTTCTPQLIIPAAPSKRRRSKSQPLPTFVAEPSTQSNSFVGTEEYIAPE.

Belongs to the protein kinase superfamily. AGC Ser/Thr protein kinase family. As to quaternary structure, homodimer. Interacts with PKS1, PKS2, RPT3 and PHOT1. Associates with CBC1 and CBC2. Binds to BHP. The cofactor is FMN. Post-translationally, autophosphorylated in response to blue light irradiation. 2 molecules of FMN bind covalently to cysteines after exposure to blue light and are reversed in the dark. Expressed in leaves, stems and flowers, and to a lower extent in roots. Present in guard cells (at protein level).

It is found in the cell membrane. It carries out the reaction L-seryl-[protein] + ATP = O-phospho-L-seryl-[protein] + ADP + H(+). The enzyme catalyses L-threonyl-[protein] + ATP = O-phospho-L-threonyl-[protein] + ADP + H(+). Autophosphorylation is inhibited by staurosporine, but not by tyrphostin 9, sphingosine, GW5074 and BML-265. Functionally, protein kinase that acts as a blue light photoreceptor in a signal-transduction pathway for photo-induced movements. Triggers the phosphorylation of AHA1 and AHA2 C-terminal penultimate Thr in guard cells to activate them and induce stomatal opening in response to blue light (BL). Also phosphorylates BLUS1, a kinase involved in stomatal opening. Mediates calcium spiking of extra- and intracellular origins in response to blue light. Involved in hypocotyl phototropism. Contributes to the chloroplast accumulation in low blue light and mediates their translocation (avoidance response) at high fluence. Regulates stomata opening and photomorphogenesis response of leaf tissue. Not involved in hypocotyl elongation inhibition, anthocyanin accumulation or cotyledon opening. The sequence is that of Phototropin-2 from Arabidopsis thaliana (Mouse-ear cress).